The chain runs to 717 residues: Ribosomal RNA large subunit methyltransferase K/L (717 aa).

In terms of domain architecture, THUMP spans Asp-44 to Leu-155.

Belongs to the methyltransferase superfamily. RlmKL family.

The protein resides in the cytoplasm. It carries out the reaction guanosine(2445) in 23S rRNA + S-adenosyl-L-methionine = N(2)-methylguanosine(2445) in 23S rRNA + S-adenosyl-L-homocysteine + H(+). The enzyme catalyses guanosine(2069) in 23S rRNA + S-adenosyl-L-methionine = N(2)-methylguanosine(2069) in 23S rRNA + S-adenosyl-L-homocysteine + H(+). Its function is as follows. Specifically methylates the guanine in position 2445 (m2G2445) and the guanine in position 2069 (m7G2069) of 23S rRNA. The sequence is that of Ribosomal RNA large subunit methyltransferase K/L from Francisella tularensis subsp. tularensis (strain WY96-3418).